Here is a 160-residue protein sequence, read N- to C-terminus: Small ribosomal subunit protein uS7 (160 aa).

It belongs to the universal ribosomal protein uS7 family. As to quaternary structure, part of the 30S ribosomal subunit. Contacts proteins S9 and S11.

One of the primary rRNA binding proteins, it binds directly to 16S rRNA where it nucleates assembly of the head domain of the 30S subunit. Is located at the subunit interface close to the decoding center, probably blocks exit of the E-site tRNA. The polypeptide is Small ribosomal subunit protein uS7 (Ehrlichia chaffeensis (strain ATCC CRL-10679 / Arkansas)).